Here is a 184-residue protein sequence, read N- to C-terminus: NADH-quinone oxidoreductase subunit B (184 aa).

C37, C38, C103, and C132 together coordinate [4Fe-4S] cluster.

This sequence belongs to the complex I 20 kDa subunit family. NDH-1 is composed of 14 different subunits. Subunits NuoB, C, D, E, F, and G constitute the peripheral sector of the complex. Requires [4Fe-4S] cluster as cofactor.

It localises to the cell membrane. The enzyme catalyses a quinone + NADH + 5 H(+)(in) = a quinol + NAD(+) + 4 H(+)(out). In terms of biological role, NDH-1 shuttles electrons from NADH, via FMN and iron-sulfur (Fe-S) centers, to quinones in the respiratory chain. The immediate electron acceptor for the enzyme in this species is believed to be a menaquinone. Couples the redox reaction to proton translocation (for every two electrons transferred, four hydrogen ions are translocated across the cytoplasmic membrane), and thus conserves the redox energy in a proton gradient. The chain is NADH-quinone oxidoreductase subunit B from Nocardia farcinica (strain IFM 10152).